The sequence spans 303 residues: Uracil phosphoribosyltransferase (303 aa).

A unknown region spans residues 1 to 86; that stretch reads MHIIMKTILA…RYVSSTPTDS (86 aa). The interval 87–303 is UPRTase; it reads LSSKPLAAVY…DRLCGTSNPS (217 aa). 5-phospho-alpha-D-ribose 1-diphosphate is bound by residues Arg170, Arg195, and 222-230; that span reads DPMLATGGS. Uracil is bound by residues Ile285 and 290-292; that span reads GDA. 5-phospho-alpha-D-ribose 1-diphosphate is bound at residue Asp291.

The protein belongs to the UPRTase family. It depends on Mg(2+) as a cofactor.

The enzyme catalyses UMP + diphosphate = 5-phospho-alpha-D-ribose 1-diphosphate + uracil. It participates in pyrimidine metabolism; UMP biosynthesis via salvage pathway; UMP from uracil: step 1/1. Its activity is regulated as follows. Allosterically activated by GTP. In terms of biological role, catalyzes the conversion of uracil and 5-phospho-alpha-D-ribose 1-diphosphate (PRPP) to UMP and diphosphate. This is Uracil phosphoribosyltransferase (upp) from Chlamydia muridarum (strain MoPn / Nigg).